Here is a 318-residue protein sequence, read N- to C-terminus: Protein disulfide-isomerase MPD1 (318 aa).

An N-terminal signal peptide occupies residues 1 to 21; the sequence is MLFLNIIKLLLGLFIMNEVKA. A Thioredoxin domain is found at 22–158; that stretch reads QNFYDSDPHI…SLSRIRSYVK (137 aa). Asn-47 carries an N-linked (GlcNAc...) asparagine glycan. The cysteines at positions 59 and 62 are disulfide-linked. An N-linked (GlcNAc...) asparagine glycan is attached at Asn-307. The Prevents secretion from ER motif lies at 315–318; the sequence is HDEL.

Belongs to the protein disulfide isomerase family. Interacts with CNE1 and EPS1.

Its subcellular location is the endoplasmic reticulum lumen. It carries out the reaction Catalyzes the rearrangement of -S-S- bonds in proteins.. Its function is as follows. Participates in the folding of proteins containing disulfide bonds. This Saccharomyces cerevisiae (strain ATCC 204508 / S288c) (Baker's yeast) protein is Protein disulfide-isomerase MPD1 (MPD1).